A 110-amino-acid chain; its full sequence is PTS system oligo-beta-mannoside-specific EIIA component (110 aa).

One can recognise a PTS EIIA type-3 domain in the interval 9–107; sequence LTDEQISFQL…VKEMLDLFKT (99 aa). The Tele-phosphohistidine intermediate role is filled by His83. Position 83 is a phosphohistidine; by HPr (His83).

It is found in the cytoplasm. Functionally, the phosphoenolpyruvate-dependent sugar phosphotransferase system (sugar PTS), a major carbohydrate active transport system, catalyzes the phosphorylation of incoming sugar substrates concomitantly with their translocation across the cell membrane. The enzyme II GmuABC PTS system is involved in the transport of oligo-glucomannans such as cellobiose or mannobiose. The chain is PTS system oligo-beta-mannoside-specific EIIA component from Bacillus subtilis (strain 168).